Consider the following 322-residue polypeptide: Deoxyhypusine hydroxylase (322 aa).

HEAT-like PBS-type repeat units follow at residues 76 to 102 (LKHEVAYVLGQTKNMAGAPLLRDVLAD) and 109 to 135 (VRHEAAEALGALNDVDSLDILEKYFKE). The Fe cation site is built by H78, E79, H111, E112, H236, E237, H269, and E270. The stretch at 267 to 293 (VRHEAAEALGSIATDDVLPVLKEHLKD) is one HEAT-like PBS-type 3 repeat.

Belongs to the deoxyhypusine hydroxylase family. The cofactor is Fe(2+).

The protein resides in the cytoplasm. It is found in the nucleus. It catalyses the reaction [eIF5A protein]-deoxyhypusine + AH2 + O2 = [eIF5A protein]-hypusine + A + H2O. The protein operates within protein modification; eIF5A hypusination. Functionally, catalyzes the hydroxylation of the N(6)-(4-aminobutyl)-L-lysine intermediate to form hypusine, an essential post-translational modification only found in mature eIF-5A factor. The polypeptide is Deoxyhypusine hydroxylase (Kluyveromyces lactis (strain ATCC 8585 / CBS 2359 / DSM 70799 / NBRC 1267 / NRRL Y-1140 / WM37) (Yeast)).